Reading from the N-terminus, the 469-residue chain is Zinc transporter SLC39A7 (469 aa).

A helical transmembrane segment spans residues Trp-10–Gly-30. 2 stretches are compositionally biased toward basic and acidic residues: residues Phe-42–His-56 and His-66–His-114. The disordered stretch occupies residues Phe-42–Gly-121. Position 66 is a pros-methylhistidine (His-66). Transmembrane regions (helical) follow at residues Ala-138 to Val-158, Leu-169 to Ile-189, and Gly-214 to Glu-234. Over residues Gly-242–His-263 the composition is skewed to basic residues. Residues Gly-242 to Lys-310 are disordered. Basic and acidic residues predominate over residues Gly-264 to Gly-285. 2 positions are modified to phosphoserine; by CK2: Ser-275 and Ser-276. 2 helical membrane passes run Met-381–Thr-401 and Gly-417–Leu-436.

The protein belongs to the ZIP transporter (TC 2.A.5) family. KE4/Catsup subfamily. In terms of assembly, homodimer. Rapidly phosphorylated by CK2 following Zn(2+) treatment. This phosphorylation is required for efficient cytosolic Zn(2+) release. Post-translationally, methylation at some His residue by METTL9 leads to reduced zinc-binding. In terms of tissue distribution, widely expressed.

Its subcellular location is the endoplasmic reticulum membrane. It localises to the golgi apparatus. It is found in the cis-Golgi network membrane. It carries out the reaction Zn(2+)(in) = Zn(2+)(out). With respect to regulation, phosphorylation activates zinc transport activity. Its function is as follows. Transports Zn(2+) from the endoplasmic reticulum (ER)/Golgi apparatus to the cytosol, playing an essential role in the regulation of cytosolic zinc levels. Acts as a gatekeeper of zinc release from intracellular stores, requiring post-translational activation by phosphorylation, resulting in activation of multiple downstream pathways leading to cell growth and proliferation. Has an essential role in B cell development and is required for proper B cell receptor signaling. Plays an important role in maintaining intestinal epithelial homeostasis and skin dermis development by regulating ER function. Controls cell signaling pathways involved in glucose metabolism in skeletal muscle. Has a protective role against ER stress in different biological contexts. Mediates Zn(2+)-induced ferroptosis. This Homo sapiens (Human) protein is Zinc transporter SLC39A7 (SLC39A7).